Consider the following 1375-residue polypeptide: Mediator of RNA polymerase II transcription subunit 13 (1375 aa).

Residues 1 to 51 (MKASEMARPPMRPGNPHAFASPATTPSRTASPNNAQGANVRTTQGGNQAGA) are disordered. The span at 22–51 (PATTPSRTASPNNAQGANVRTTQGGNQAGA) shows a compositional bias: polar residues. 2 coiled-coil regions span residues 182–216 (ADDS…WLSR) and 297–324 (QLER…KDEA). Basic and acidic residues predominate over residues 313–324 (AEEDAMRRKDEA). Disordered stretches follow at residues 313–333 (AEED…SSPF), 350–370 (YPTP…DTPS), 397–417 (YTTT…APLE), 537–581 (ATSP…PASL), 660–689 (RAVS…VDTH), 841–862 (QAKG…IPSN), and 1233–1285 (TPTT…AADP). Residues 397-411 (YTTTDNQQHASTSPT) are compositionally biased toward polar residues. The segment covering 666 to 685 (SASDSESETSDMSEGSPEDP) has biased composition (acidic residues). The span at 1233 to 1259 (TPTTPAPSNSSAQANTNTPGSTPQTGV) shows a compositional bias: polar residues.

The protein belongs to the Mediator complex subunit 13 family. Component of the SRB8-11 complex, which itself associates with the Mediator complex.

It localises to the nucleus. In terms of biological role, component of the SRB8-11 complex. The SRB8-11 complex is a regulatory module of the Mediator complex which is itself involved in regulation of basal and activated RNA polymerase II-dependent transcription. The SRB8-11 complex may be involved in the transcriptional repression of a subset of genes regulated by Mediator. It may inhibit the association of the Mediator complex with RNA polymerase II to form the holoenzyme complex. The protein is Mediator of RNA polymerase II transcription subunit 13 (SSN2) of Phaeosphaeria nodorum (strain SN15 / ATCC MYA-4574 / FGSC 10173) (Glume blotch fungus).